The sequence spans 335 residues: Adenosine deaminase (335 aa).

H12 and H14 together coordinate Zn(2+). H14 and D16 together coordinate substrate. H197 contributes to the Zn(2+) binding site. Residue E200 is the Proton donor of the active site. D278 contacts Zn(2+).

The protein belongs to the metallo-dependent hydrolases superfamily. Adenosine and AMP deaminases family. Adenosine deaminase subfamily. Zn(2+) is required as a cofactor.

It carries out the reaction adenosine + H2O + H(+) = inosine + NH4(+). It catalyses the reaction 2'-deoxyadenosine + H2O + H(+) = 2'-deoxyinosine + NH4(+). Catalyzes the hydrolytic deamination of adenosine and 2-deoxyadenosine. The polypeptide is Adenosine deaminase (Clostridium botulinum (strain Okra / Type B1)).